Here is a 368-residue protein sequence, read N- to C-terminus: Divinyl chlorophyll a/b light-harvesting protein PcbA (368 aa).

The next 6 helical transmembrane spans lie at 27–47, 63–83, 89–109, 203–223, 243–263, and 307–327; these read FIAS…ANTL, GFVV…NGVI, MLVV…GAML, VMGG…WHIF, FVLS…AFWA, and LSNF…WHGL.

It belongs to the PsbB/PsbC family. IsiA/Pcb subfamily. In terms of assembly, the antenna complex consists of divinyl chlorophylls (a and b) and divinyl chlorophyll a/b binding proteins. Forms complexes with PSII, consisting of a PSII dimer and 4 or 8 PcbA subunits. These complexes are also found under conditions of iron-starvation. Requires divinyl chlorophyll a as cofactor. It depends on divinyl chlorophyll b as a cofactor.

The protein resides in the cellular thylakoid membrane. In terms of biological role, the antenna complex functions as a light receptor, it captures and delivers excitation energy to photosystems II. The Prochlorales pcb genes are not related to higher plant LHCs. The protein is Divinyl chlorophyll a/b light-harvesting protein PcbA (pcbA) of Prochlorococcus marinus (strain MIT 9313).